The sequence spans 489 residues: Glycogen synthase (489 aa).

ADP-alpha-D-glucose is bound at residue lysine 18.

The protein belongs to the glycosyltransferase 1 family. Bacterial/plant glycogen synthase subfamily.

The enzyme catalyses [(1-&gt;4)-alpha-D-glucosyl](n) + ADP-alpha-D-glucose = [(1-&gt;4)-alpha-D-glucosyl](n+1) + ADP + H(+). The protein operates within glycan biosynthesis; glycogen biosynthesis. Synthesizes alpha-1,4-glucan chains using ADP-glucose. This is Glycogen synthase from Rhodopseudomonas palustris (strain BisB18).